Here is a 344-residue protein sequence, read N- to C-terminus: Enoyl-[acyl-carrier-protein] reductase, mitochondrial (344 aa).

The transit peptide at 1–14 (MLKVLSLRSALQRA) directs the protein to the mitochondrion. Catalysis depends on tyrosine 69, which acts as the Proton donor. Residues asparagine 142, 168–171 (NSAV), 191–193 (RSR), 255–258 (YGGM), 280–282 (FWM), and lysine 338 contribute to the NADP(+) site.

The protein belongs to the zinc-containing alcohol dehydrogenase family. Quinone oxidoreductase subfamily. In terms of assembly, homodimer.

The protein resides in the mitochondrion. The enzyme catalyses a 2,3-saturated acyl-[ACP] + NADP(+) = a (2E)-enoyl-[ACP] + NADPH + H(+). Its function is as follows. Catalyzes the NADPH-dependent reduction of trans-2-enoyl thioesters in mitochondrial fatty acid synthesis (fatty acid synthesis type II). Fatty acid chain elongation in mitochondria uses acyl carrier protein (ACP) as an acyl group carrier, but the enzyme accepts both ACP and CoA thioesters as substrates in vitro. May provide the octanoyl chain used for lipoic acid biosynthesis, regulating protein lipoylation and mitochondrial respiratory activity. Involved in iron homeostasis; affecting Fe-S cluster assembly and ceramide metabolism. Required for proper morphology and bioenergetic functions of mitochondria. Required for maintenance of neurons. This chain is Enoyl-[acyl-carrier-protein] reductase, mitochondrial, found in Caenorhabditis elegans.